We begin with the raw amino-acid sequence, 730 residues long: Ribosomal RNA large subunit methyltransferase K/L (730 aa).

The THUMP domain occupies 46-157 (TAYRLCLWSR…RGEAILSLDL (112 aa)). The span at 399–408 (AAVEEGEPRR) shows a compositional bias: basic and acidic residues. Residues 399 to 418 (AAVEEGEPRRQAPVASEPAR) are disordered.

Belongs to the methyltransferase superfamily. RlmKL family.

It localises to the cytoplasm. It catalyses the reaction guanosine(2445) in 23S rRNA + S-adenosyl-L-methionine = N(2)-methylguanosine(2445) in 23S rRNA + S-adenosyl-L-homocysteine + H(+). The enzyme catalyses guanosine(2069) in 23S rRNA + S-adenosyl-L-methionine = N(2)-methylguanosine(2069) in 23S rRNA + S-adenosyl-L-homocysteine + H(+). In terms of biological role, specifically methylates the guanine in position 2445 (m2G2445) and the guanine in position 2069 (m7G2069) of 23S rRNA. This Pseudomonas entomophila (strain L48) protein is Ribosomal RNA large subunit methyltransferase K/L.